The sequence spans 36 residues: Photosystem I reaction center subunit VIII (36 aa).

Residues 6–28 (LPSIFVPLVGLMFPAIAMASLSL) form a helical membrane-spanning segment.

Belongs to the PsaI family.

The protein localises to the plastid. Its subcellular location is the chloroplast thylakoid membrane. Its function is as follows. May help in the organization of the PsaL subunit. This is Photosystem I reaction center subunit VIII from Calycanthus floridus var. glaucus (Eastern sweetshrub).